The primary structure comprises 1015 residues: Putative calcium-transporting ATPase 7, plasma membrane-type (1015 aa).

The residue at position 1 (Met-1) is an N-acetylmethionine. Residues 1–161 lie on the Cytoplasmic side of the membrane; sequence MESYLNSNFD…NKFAESELRS (161 aa). Residues 20-31 form an interaction with calmodulin region; it reads VLEKWRNLCSVV. Residue Ser-45 is modified to Phosphoserine; by CPK. The chain crosses the membrane as a helical span at residues 162–182; sequence FWVFVWEALQDMTLMILGVCA. Residues 183–200 are Lumenal-facing; that stretch reads FVSLIVGIATEGWPQGSH. The chain crosses the membrane as a helical span at residues 201–221; that stretch reads DGLGIVASILLVVFVTATSDY. Over 222 to 349 the chain is Cytoplasmic; that stretch reads RQSLQFRDLD…DDETPLQVKL (128 aa). A helical membrane pass occupies residues 350 to 369; that stretch reads NGVATIIGKIGLSFAIVTFA. Residues 370–399 lie on the Lumenal side of the membrane; the sequence is VLVQGMFMRKLSLGPHWWWSGDDALELLEY. Residues 400–417 form a helical membrane-spanning segment; the sequence is FAIAVTIVVVAVPEGLPL. The Cytoplasmic segment spans residues 418-811; it reads AVTLSLAFAM…KWGRSVYINI (394 aa). Asp-455 (4-aspartylphosphate intermediate) is an active-site residue. Residues Asp-756 and Asp-760 each coordinate Mg(2+). The chain crosses the membrane as a helical span at residues 812-830; the sequence is QKFVQFQLTVNVVALIVNF. Residues 831–841 lie on the Lumenal side of the membrane; that stretch reads SSACLTGSAPL. Residues 842-862 traverse the membrane as a helical segment; that stretch reads TAVQLLWVNMIMDTLGALALA. The Cytoplasmic segment spans residues 863 to 882; the sequence is TEPPNNELMKRMPVGRRGNF. Residues 883 to 905 traverse the membrane as a helical segment; it reads ITNAMWRNILGQAVYQFIIIWIL. Residues 906-917 lie on the Lumenal side of the membrane; it reads QAKGKSMFGLVG. A helical transmembrane segment spans residues 918 to 939; it reads SDSTLVLNTLIFNCFVFCQVFN. Over 940–957 the chain is Cytoplasmic; that stretch reads EVSSREMEEIDVFKGILD. Residues 958-979 traverse the membrane as a helical segment; it reads NYVFVVVIGATVFFQIIIIEFL. The Lumenal segment spans residues 980–989; that stretch reads GTFASTTPLT. Residues 990–1011 form a helical membrane-spanning segment; sequence IVQWFFSIFVGFLGMPIAAGLK. Topologically, residues 1012–1015 are cytoplasmic; that stretch reads KIPV.

This sequence belongs to the cation transport ATPase (P-type) (TC 3.A.3) family. Type IIB subfamily.

It localises to the membrane. It carries out the reaction Ca(2+)(in) + ATP + H2O = Ca(2+)(out) + ADP + phosphate + H(+). With respect to regulation, activated by calmodulin. Functionally, this magnesium-dependent enzyme catalyzes the hydrolysis of ATP coupled with the translocation of calcium from the cytosol out of the cell or into organelles. In Arabidopsis thaliana (Mouse-ear cress), this protein is Putative calcium-transporting ATPase 7, plasma membrane-type (ACA7).